Reading from the N-terminus, the 111-residue chain is Photosystem II reaction center Psb28 protein (111 aa).

It belongs to the Psb28 family. Part of the photosystem II complex.

The protein localises to the cellular thylakoid membrane. The chain is Photosystem II reaction center Psb28 protein from Crocosphaera subtropica (strain ATCC 51142 / BH68) (Cyanothece sp. (strain ATCC 51142)).